The following is a 750-amino-acid chain: MIIRSPEPEVKILVDRDPIKTSFEEWAKPGHFSRTIAKGPDTTTWIWNLHADAHDFDSHTSDLEEISRKVFSAHFGQLSIIFLWLSGMYFHGARFSNYEAWLSDPTHIGPSAQVVWPIVGQEILNGDVGGGFRGIQITSGFFQIWRASGITSELQLYCTAIGALVFAALMLFAGWFHYHKAAPKLAWFQDVESMLNHHLAGLLGLGSLSWAGHQVHVSLPINQFLNAGVDPKEIPLPHEFILNRDLLAQLYPSFAEGATPFFTLNWSKYSEFLTFRGGLDPVTGGLWLTDIAHHHLAIAILFLLAGHMYRTNWGIGHGLKDILEAHKGPFTGQGHKGLYEILTTSWHAQLSLNLAMLGSLTIVVAHHMYSMPPYPYLATDYATQLSLFTHHMWIGGFLIVGAAAHAAIFMVRDYDPTNRYNDLLDRVLRHRDAIISHLNWVCIFLGFHSFGLYIHNDTMSALGRPQDMFSDTAIQLQPVFAQWIQNTHALAPGVTAPGETASTSLTWGGGELVTVGGKVALLPIPLGTADFLVHHIHAFTIHVTVLILLKGVLFARSSRLIPDKANLGFRFPCDGPGRGGTCQVSAWDHVFLGLFWMYNAISVVIFHFSWKMQSDVWGSISDQGVVTHITGGNFAQSSITINGWLRDFLWAQASQVIQSYGSSLSAYGLFFLGAHFVWAFSLMFLFSGRGYWQELIESIVWAHNKLKVAPATQPRALSIVQGRAVGVTHYLLGGIATTWAFFLARIIAVG.

Helical transmembrane passes span 70 to 93 (VFSA…FHGA), 156 to 179 (LYCT…FHYH), 195 to 219 (LNHH…HVSL), 291 to 309 (IAHH…GHMY), 346 to 369 (WHAQ…HHMY), 385 to 411 (LSLF…IFMV), 433 to 455 (AIIS…LYIH), and 531 to 549 (FLVH…LILL). Positions 573 and 582 each coordinate [4Fe-4S] cluster. The next 2 membrane-spanning stretches (helical) occupy residues 589-610 (HVFL…HFSW) and 664-686 (LSAY…MFLF). Histidine 675 is a binding site for chlorophyll a'. Positions 683 and 691 each coordinate chlorophyll a. Position 692 (tryptophan 692) interacts with phylloquinone. A helical transmembrane segment spans residues 724-744 (AVGVTHYLLGGIATTWAFFLA).

Belongs to the PsaA/PsaB family. In terms of assembly, the PsaA/B heterodimer binds the P700 chlorophyll special pair and subsequent electron acceptors. PSI consists of a core antenna complex that captures photons, and an electron transfer chain that converts photonic excitation into a charge separation. The eukaryotic PSI reaction center is composed of at least 11 subunits. Requires P700 is a chlorophyll a/chlorophyll a' dimer, A0 is one or more chlorophyll a, A1 is one or both phylloquinones and FX is a shared 4Fe-4S iron-sulfur center. as cofactor.

The protein localises to the plastid. It is found in the chloroplast thylakoid membrane. It catalyses the reaction reduced [plastocyanin] + hnu + oxidized [2Fe-2S]-[ferredoxin] = oxidized [plastocyanin] + reduced [2Fe-2S]-[ferredoxin]. PsaA and PsaB bind P700, the primary electron donor of photosystem I (PSI), as well as the electron acceptors A0, A1 and FX. PSI is a plastocyanin-ferredoxin oxidoreductase, converting photonic excitation into a charge separation, which transfers an electron from the donor P700 chlorophyll pair to the spectroscopically characterized acceptors A0, A1, FX, FA and FB in turn. Oxidized P700 is reduced on the lumenal side of the thylakoid membrane by plastocyanin. The polypeptide is Photosystem I P700 chlorophyll a apoprotein A1 (Arabis hirsuta (Hairy rock-cress)).